A 179-amino-acid chain; its full sequence is Large ribosomal subunit protein uL5 (179 aa).

This sequence belongs to the universal ribosomal protein uL5 family. Part of the 50S ribosomal subunit; part of the 5S rRNA/L5/L18/L25 subcomplex. Contacts the 5S rRNA and the P site tRNA. Forms a bridge to the 30S subunit in the 70S ribosome.

This is one of the proteins that bind and probably mediate the attachment of the 5S RNA into the large ribosomal subunit, where it forms part of the central protuberance. In the 70S ribosome it contacts protein S13 of the 30S subunit (bridge B1b), connecting the 2 subunits; this bridge is implicated in subunit movement. Contacts the P site tRNA; the 5S rRNA and some of its associated proteins might help stabilize positioning of ribosome-bound tRNAs. The sequence is that of Large ribosomal subunit protein uL5 from Sodalis glossinidius (strain morsitans).